The chain runs to 371 residues: Putative glutamate--cysteine ligase 2 (371 aa).

Belongs to the glutamate--cysteine ligase type 2 family. YbdK subfamily.

The enzyme catalyses L-cysteine + L-glutamate + ATP = gamma-L-glutamyl-L-cysteine + ADP + phosphate + H(+). Its function is as follows. ATP-dependent carboxylate-amine ligase which exhibits weak glutamate--cysteine ligase activity. The protein is Putative glutamate--cysteine ligase 2 of Nitrosospira multiformis (strain ATCC 25196 / NCIMB 11849 / C 71).